Here is a 115-residue protein sequence, read N- to C-terminus: Secreted RxLR effector protein 2 (115 aa).

Residues 1 to 22 (MICRSPLIVVMLFVIAAHTVLA) form the signal peptide. The RxLR-dEER motif lies at 57–82 (RFLRQETTFEKKLGVNDVHAVHAEER).

This sequence belongs to the RxLR effector family.

The protein resides in the secreted. The protein localises to the host cytoplasm. It is found in the host nucleus. In terms of biological role, effector that acts as a broad suppressor of cell death to interrupt plant immunity. Inhibits cell death induced by cell death-inducing proteins, including the PAMP elicitor INF1 from P.infestans. The polypeptide is Secreted RxLR effector protein 2 (Plasmopara viticola (Downy mildew of grapevine)).